A 189-amino-acid polypeptide reads, in one-letter code: MATMLLLLATLAGLFTTTEGQSFHLGKCPSPPVQENFDVKKYLGRWYEIEKIPVSFEKGNCIQANYSLMENGNIKVLNKELRPDGTLNQVEGEAKQSNMSEPAKLEVQFFSLMPPAPYWILATDYESYALVYSCTTFFWFFHVDYVWILGRNPYLPPETITYLKYILTSNDIDIAKITTKDQANCPDFL.

The N-terminal stretch at 1 to 20 (MATMLLLLATLAGLFTTTEG) is a signal peptide. Gln21 bears the Pyrrolidone carboxylic acid mark. Intrachain disulfides connect Cys28–Cys134 and Cys61–Cys185. N-linked (GlcNAc...) asparagine glycans are attached at residues Asn65 and Asn98.

It belongs to the calycin superfamily. Lipocalin family. As to quaternary structure, homodimer. Expressed in liver, kidney, bladder, adrenal, cerebrum, duodenum, testis, lung, spleen, pancreas, heart and skin.

Its subcellular location is the secreted. Functionally, APOD occurs in the macromolecular complex with lecithin-transport and binding of bilin. Appears to be able to transport a variety of ligands in a number of different contexts. The chain is Apolipoprotein D (Apod) from Rattus norvegicus (Rat).